A 499-amino-acid polypeptide reads, in one-letter code: Endoglucanase (499 aa).

An N-terminal signal peptide occupies residues 1–29 (MKRSISIFITCLLIAVLTMGGLLPSPASA). Residues H65, 69 to 70 (WY), Y96, and H131 each bind substrate. The active-site Proton donor is the E169. Residue Y231 coordinates substrate. Residue E257 is the Nucleophile of the active site. Residues 263–264 (AS), W291, and 296–298 (KQE) contribute to the substrate site. Residues 330–340 (RGTKDSTKDVP) are compositionally biased toward basic and acidic residues. The segment at 330–353 (RGTKDSTKDVPETPAQDNPTQEKG) is disordered. The region spanning 350 to 499 (QEKGVSVQYK…GKLIWGTEPN (150 aa)) is the CBM3 domain.

The protein belongs to the glycosyl hydrolase 5 (cellulase A) family.

It catalyses the reaction Endohydrolysis of (1-&gt;4)-beta-D-glucosidic linkages in cellulose, lichenin and cereal beta-D-glucans.. The chain is Endoglucanase (bglC) from Bacillus subtilis.